The sequence spans 945 residues: Bifunctional glutamine synthetase adenylyltransferase/adenylyl-removing enzyme (945 aa).

The segment at 1–440 (MMPLSPQLQQ…VFNELIGDDE (440 aa)) is adenylyl removase. Residues 449–945 (AEYWRELWQD…SASWQKWLMA (497 aa)) are adenylyl transferase.

Belongs to the GlnE family. Mg(2+) is required as a cofactor.

It catalyses the reaction [glutamine synthetase]-O(4)-(5'-adenylyl)-L-tyrosine + phosphate = [glutamine synthetase]-L-tyrosine + ADP. The catalysed reaction is [glutamine synthetase]-L-tyrosine + ATP = [glutamine synthetase]-O(4)-(5'-adenylyl)-L-tyrosine + diphosphate. Its function is as follows. Involved in the regulation of glutamine synthetase GlnA, a key enzyme in the process to assimilate ammonia. When cellular nitrogen levels are high, the C-terminal adenylyl transferase (AT) inactivates GlnA by covalent transfer of an adenylyl group from ATP to specific tyrosine residue of GlnA, thus reducing its activity. Conversely, when nitrogen levels are low, the N-terminal adenylyl removase (AR) activates GlnA by removing the adenylyl group by phosphorolysis, increasing its activity. The regulatory region of GlnE binds the signal transduction protein PII (GlnB) which indicates the nitrogen status of the cell. This is Bifunctional glutamine synthetase adenylyltransferase/adenylyl-removing enzyme from Klebsiella pneumoniae subsp. pneumoniae (strain ATCC 700721 / MGH 78578).